The following is a 1291-amino-acid chain: MGARAFSHDSIFIPDGGAESEQTVQAMSQDNILGKVKTLQRQLGKNIKFGQRPSNAIPMKKAGSTDASSEEDFVLTSPMEIVTQQDIVPSDTENKSSDTPSSSSPLNLPEAGSDMEEKVAPVKPSRPKRHLSSAGTIESVNLDAIPLAIARLDNSAARHKLAVKPKNQRVSRKHRWLAQDRQNEPGSFESQSSLDQNGQLGEDKHIWHGEEPEPLESHEEKRLHEEYWRELEAKCKRQKAEAAEKRRQEEQRRQALERRLWEESLRQELLEEEEEGEEEEEVKEEGEEGEEVGLQPRAGKVPPEEGHQSGPEEQRCTEQELGGADDPARLEAEERRREQEEAERQAEKLRQREAERQEEEQKQREAERQEEEARQCEAERQAEKLRQREAERQEEEARQREAERQAEKLRQREAERQEEELRQREEAERQEKLRQRDAESQEEELRQREAERQRAQEEDAKGMLQEEEEEAKRIEELKGKETPEPLVEEGPQSPEGESQPWLTDDADQRSPLQRDLEKPGEREREDLESAGQREIAEEPRGEGEPAEQSGDLDAHCGGVDGEGKETAQTDSPQPQERQMEGTPAPEENEATAADIDRKVEELRWQEVDERQTMPRPYTFQVSSGSRQILFPKVNLSPVTPAKDASLAPAAQEPPAPRGAASHALPSALSIPHTAILVTGAQLCGPAVNLSQIKDTACKSLLGLSEEKRPMDVPTVESRAGSGKSRPAPESPSNAAALAEWASIRSRILKNSEGDQRGDREPARAGDEPVPRARCDSRGNVRRTPPVNAKFSIMPAWQKFSDSGAETFRQSLDGESGRKKPGLAPSEETAPQPHAAAQQEVSQEPPDTTDGCKFAKDLPSFLVPGLPSPQKAASRTESTTTLDSETTSDVGNPDPAMPGGEEKASPFGIKLRRTNYSLRFHCDQQAEQKKKKRHSSTGDSVGGATPATGSVSGESEPEATFLKHGPSLPQERKPALSPRKDSAESHSSGHYVAVAQSGLPPASGQTPAPEQDRAVSKMPSMQKPALAPKPASQTPPSSPLSKLSRPHLVELLARRAGKLDSEPSETAKESSDNQPPSPSLPEELKGQKRDEKDVPEKKPASPPLPAGQQERPSLIPETGRKEKPVLQSRHSLDGSKVTEKVETAQPLWITLALQKQKGFREQQATREERKQAREAKQAEKLSKETVSVSLQPGSSRASKTAPVHKPAAPSEEKKPETAVSRLQRREQLKKSNTLPTSVTVEISDSAPSAALVKDVTKRFSTPDAAPVSTEPAWLALAKRKAKAWSDCPQIIK.

Ser7 and Ser28 each carry phosphoserine. Disordered stretches follow at residues 48–71 (KFGQRPSNAIPMKKAGSTDASSEE), 84–137 (QQDI…AGTI), 159–221 (HKLA…HEEK), 234–253 (KCKRQKAEAAEKRRQEEQRR), 267–663 (QELL…ASHA), and 701–1238 (LGLS…TSVT). Phosphoserine is present on Ser132. A compositionally biased stretch (basic residues) spans 159-176 (HKLAVKPKNQRVSRKHRW). Positions 184–199 (EPGSFESQSSLDQNGQ) are enriched in polar residues. Residues 201–221 (GEDKHIWHGEEPEPLESHEEK) show a composition bias toward basic and acidic residues. A compositionally biased stretch (acidic residues) spans 270 to 291 (LEEEEEGEEEEEVKEEGEEGEE). Composition is skewed to basic and acidic residues over residues 302–318 (PPEEGHQSGPEEQRCTE), 326–461 (DPAR…EDAK), and 470–483 (EAKRIEELKGKETP). Positions 324-560 (ADDPARLEAE…DLDAHCGGVD (237 aa)) are required for interaction with actin-capping proteins. Position 482 is a phosphothreonine (Thr482). 2 positions are modified to phosphoserine: Ser493 and Ser510. Composition is skewed to basic and acidic residues over residues 506-527 (ADQRSPLQRDLEKPGEREREDL) and 534-543 (EIAEEPRGEG). Residues 580–593 (EGTPAPEENEATAA) are compositionally biased toward low complexity. Residues 594–612 (DIDRKVEELRWQEVDERQT) are compositionally biased toward basic and acidic residues. Ser636 bears the Phosphoserine mark. The residue at position 639 (Thr639) is a Phosphothreonine. Over residues 749–778 (KNSEGDQRGDREPARAGDEPVPRARCDSRG) the composition is skewed to basic and acidic residues. At Ser867 the chain carries Phosphoserine. Positions 875-888 (TESTTTLDSETTSD) are enriched in low complexity. The segment covering 969–983 (QERKPALSPRKDSAE) has biased composition (basic and acidic residues). A Phosphothreonine modification is found at Thr1033. Position 1037 is a phosphoserine (Ser1037). Basic and acidic residues predominate over residues 1056-1070 (GKLDSEPSETAKESS). Ser1076 is subject to Phosphoserine. Composition is skewed to basic and acidic residues over residues 1081 to 1098 (EELKGQKRDEKDVPEKKP), 1117 to 1141 (TGRKEKPVLQSRHSLDGSKVTEKVE), and 1157 to 1182 (GFREQQATREERKQAREAKQAEKLSK). 2 stretches are compositionally biased toward polar residues: residues 1183–1197 (ETVSVSLQPGSSRAS) and 1229–1238 (KSNTLPTSVT).

In terms of assembly, directly interacts with actin-capping proteins CAPZA1, CAPZA2 and CAPZB; this interaction decreases the binding of capping proteins to actin. Expressed in the small intestine (at protein level).

It is found in the cytoplasm. The protein resides in the cytosol. Its function is as follows. Involved in epithelial cell integrity by acting on the dynamics of the actin cytoskeleton. Positively regulates the actin polymerization, by inhibiting the interaction of actin-capping proteins with actin. The protein is Capping protein-inhibiting regulator of actin dynamics of Mus musculus (Mouse).